The following is a 486-amino-acid chain: Cardiolipin synthase A (486 aa).

A run of 2 helical transmembrane segments spans residues 3–23 (IFYN…IANI) and 38–58 (MSWL…WFFF). PLD phosphodiesterase domains lie at 219–246 (VDVR…VDPY) and 399–426 (QKGL…DMRS). Residues H224, K226, D231, H404, K406, and D411 contribute to the active site.

This sequence belongs to the phospholipase D family. Cardiolipin synthase subfamily. ClsA sub-subfamily.

Its subcellular location is the cell inner membrane. It catalyses the reaction 2 a 1,2-diacyl-sn-glycero-3-phospho-(1'-sn-glycerol) = a cardiolipin + glycerol. Its function is as follows. Catalyzes the reversible phosphatidyl group transfer from one phosphatidylglycerol molecule to another to form cardiolipin (CL) (diphosphatidylglycerol) and glycerol. In Buchnera aphidicola subsp. Acyrthosiphon pisum (strain 5A), this protein is Cardiolipin synthase A.